The chain runs to 510 residues: UDP-N-acetylmuramyl-tripeptide synthetase (510 aa).

Serine 36 contributes to the UDP-N-acetyl-alpha-D-muramoyl-L-alanyl-D-glutamate binding site. Residue 113–119 (GTKGKTT) participates in ATP binding. UDP-N-acetyl-alpha-D-muramoyl-L-alanyl-D-glutamate-binding positions include 159-160 (TT), serine 186, and arginine 194. Position 228 is an N6-carboxylysine (lysine 228).

This sequence belongs to the MurCDEF family. MurE subfamily. Carboxylation is probably crucial for Mg(2+) binding and, consequently, for the gamma-phosphate positioning of ATP.

Its subcellular location is the cytoplasm. It functions in the pathway cell wall biogenesis; peptidoglycan biosynthesis. Its function is as follows. Catalyzes the addition of an amino acid to the nucleotide precursor UDP-N-acetylmuramoyl-L-alanyl-D-glutamate (UMAG) in the biosynthesis of bacterial cell-wall peptidoglycan. This Ligilactobacillus salivarius (strain UCC118) (Lactobacillus salivarius) protein is UDP-N-acetylmuramyl-tripeptide synthetase.